Here is a 295-residue protein sequence, read N- to C-terminus: Lectin 11 (295 aa).

Residues methionine 1–lysine 22 are Cytoplasmic-facing. The chain crosses the membrane as a helical span at residues leucine 23–alanine 45. Residues asparagine 46–methionine 295 are Extracellular-facing. The N-linked (GlcNAc...) asparagine glycan is linked to asparagine 152.

It belongs to the leguminous lectin family.

It localises to the membrane. Functionally, may be involved in arbuscular mycorrhizal (AM) symbiosis with AM fungi. The chain is Lectin 11 from Medicago truncatula (Barrel medic).